The sequence spans 90 residues: Small ribosomal subunit protein uS19 (90 aa).

The protein belongs to the universal ribosomal protein uS19 family.

Protein S19 forms a complex with S13 that binds strongly to the 16S ribosomal RNA. This Hydrogenovibrio crunogenus (strain DSM 25203 / XCL-2) (Thiomicrospira crunogena) protein is Small ribosomal subunit protein uS19.